We begin with the raw amino-acid sequence, 340 residues long: Anthranilate phosphoribosyltransferase (340 aa).

5-phospho-alpha-D-ribose 1-diphosphate is bound by residues G82, 85–86 (GD), T90, 92–95 (NISS), 110–118 (KHGGRSVSS), and A122. G82 contributes to the anthranilate binding site. S94 contacts Mg(2+). R168 contributes to the anthranilate binding site. Residues D227 and E228 each contribute to the Mg(2+) site.

This sequence belongs to the anthranilate phosphoribosyltransferase family. In terms of assembly, homodimer. The cofactor is Mg(2+).

The catalysed reaction is N-(5-phospho-beta-D-ribosyl)anthranilate + diphosphate = 5-phospho-alpha-D-ribose 1-diphosphate + anthranilate. It participates in amino-acid biosynthesis; L-tryptophan biosynthesis; L-tryptophan from chorismate: step 2/5. In terms of biological role, catalyzes the transfer of the phosphoribosyl group of 5-phosphorylribose-1-pyrophosphate (PRPP) to anthranilate to yield N-(5'-phosphoribosyl)-anthranilate (PRA). This chain is Anthranilate phosphoribosyltransferase, found in Dechloromonas aromatica (strain RCB).